The following is a 1213-amino-acid chain: A disintegrin and metalloproteinase with thrombospondin motifs 19 (1213 aa).

The first 27 residues, Met-1–Gly-27, serve as a signal peptide directing secretion. A propeptide spanning residues Ile-28 to Arg-322 is cleaved from the precursor. 2 disordered regions span residues Trp-49–Ala-161 and Phe-192–Ala-215. Positions Glu-52 to Gly-71 are enriched in gly residues. Residues Arg-110 to Glu-119 are compositionally biased toward acidic residues. A compositionally biased stretch (low complexity) spans Asp-120–Ser-139. A compositionally biased stretch (pro residues) spans Pro-140 to Pro-155. Asn-266 is a glycosylation site (N-linked (GlcNAc...) asparagine). The Cysteine switch motif lies at His-298–Asp-305. Cys-300 is a binding site for Zn(2+). Residues Tyr-331–Asn-551 form the Peptidase M12B domain. Intrachain disulfides connect Cys-407/Cys-472, Cys-447/Cys-454, Cys-466/Cys-546, Cys-505/Cys-530, Cys-575/Cys-599, Cys-586/Cys-607, Cys-594/Cys-626, Cys-620/Cys-631, Cys-651/Cys-686, Cys-655/Cys-691, and Cys-666/Cys-676. His-488 lines the Zn(2+) pocket. The active site involves Glu-489. The Zn(2+) site is built by His-492 and His-498. The Disintegrin domain occupies Pro-552–Glu-639. The 53-residue stretch at His-640 to Pro-692 folds into the TSP type-1 1 domain. The segment at Ile-797–Glu-920 is spacer. Residues Asn-803, Asn-913, Asn-955, and Asn-1015 are each glycosylated (N-linked (GlcNAc...) asparagine). TSP type-1 domains follow at residues Pro-921–Pro-981, Cys-982–Met-1043, Val-1045–Glu-1089, and Lys-1093–Asn-1150. 3 disulfide bridges follow: Cys-994–Cys-1037, Cys-998–Cys-1042, and Cys-1009–Cys-1026. The PLAC domain maps to Leu-1166–Tyr-1205.

The cofactor is Zn(2+). In terms of processing, the precursor is cleaved by a furin endopeptidase. Post-translationally, glycosylated. Can be O-fucosylated by POFUT2 on a serine or a threonine residue found within the consensus sequence C1-X(2)-(S/T)-C2-G of the TSP type-1 repeat domains where C1 and C2 are the first and second cysteine residue of the repeat, respectively. Fucosylated repeats can then be further glycosylated by the addition of a beta-1,3-glucose residue by the glucosyltransferase, B3GALTL. Fucosylation mediates the efficient secretion of ADAMTS family members. Can also be C-glycosylated with one or two mannose molecules on tryptophan residues within the consensus sequence W-X-X-W of the TPRs, and N-glycosylated. These other glycosylations can also facilitate secretion. Expressed in fetal lung, but not in any adult tissues examined. Expression was detected in an osteosarcoma cDNA library.

It localises to the secreted. The protein resides in the extracellular space. It is found in the extracellular matrix. The polypeptide is A disintegrin and metalloproteinase with thrombospondin motifs 19 (ADAMTS19) (Homo sapiens (Human)).